The sequence spans 253 residues: Claudin domain-containing protein 1 (253 aa).

Residues Phe-5–Ala-25 form a helical membrane-spanning segment. 2 N-linked (GlcNAc...) asparagine glycosylation sites follow: Asn-42 and Asn-72. The next 3 membrane-spanning stretches (helical) occupy residues Phe-141 to Ala-161, Ile-175 to Ile-195, and Phe-216 to Ala-236.

It belongs to the PMP-22/EMP/MP20 family. In terms of tissue distribution, widely distributed in the adult CNS with highest expression in the corpus callosum, caudate nucleus, cerebral cortex, medulla, putamen, spinal cord, substantia nigra and subthalamic nucleus. Weak expression was detected in the adult heart.

The protein resides in the cell junction. Its subcellular location is the tight junction. The protein localises to the cell membrane. Its function is as follows. Plays a role in negatively regulating the permeability of cells to small molecules. This chain is Claudin domain-containing protein 1 (CLDND1), found in Homo sapiens (Human).